The chain runs to 138 residues: Small ribosomal subunit protein bS6 (138 aa).

The tract at residues 94-138 (VKQDGPLPTPKPTSKEDETEKEEVKPTEDKTESPAQEEKKEDSKE) is disordered. Positions 106–138 (TSKEDETEKEEVKPTEDKTESPAQEEKKEDSKE) are enriched in basic and acidic residues.

The protein belongs to the bacterial ribosomal protein bS6 family.

Its function is as follows. Binds together with bS18 to 16S ribosomal RNA. The protein is Small ribosomal subunit protein bS6 of Prochlorococcus marinus (strain NATL1A).